The primary structure comprises 380 residues: Erythronate-4-phosphate dehydrogenase (380 aa).

Positions 45 and 66 each coordinate substrate. NAD(+)-binding positions include 126–127, aspartate 146, threonine 175, 206–208, and aspartate 232; these read QV and ASR. The active site involves arginine 208. Glutamate 237 is an active-site residue. The Proton donor role is filled by histidine 254. Residue glycine 257 coordinates NAD(+). Residue tyrosine 258 coordinates substrate.

Belongs to the D-isomer specific 2-hydroxyacid dehydrogenase family. PdxB subfamily. Homodimer.

The protein localises to the cytoplasm. It carries out the reaction 4-phospho-D-erythronate + NAD(+) = (R)-3-hydroxy-2-oxo-4-phosphooxybutanoate + NADH + H(+). Its pathway is cofactor biosynthesis; pyridoxine 5'-phosphate biosynthesis; pyridoxine 5'-phosphate from D-erythrose 4-phosphate: step 2/5. Functionally, catalyzes the oxidation of erythronate-4-phosphate to 3-hydroxy-2-oxo-4-phosphonooxybutanoate. This chain is Erythronate-4-phosphate dehydrogenase, found in Pseudomonas paraeruginosa (strain DSM 24068 / PA7) (Pseudomonas aeruginosa (strain PA7)).